We begin with the raw amino-acid sequence, 109 residues long: Nucleoid-associated protein Psyc_0793 (109 aa).

The protein belongs to the YbaB/EbfC family. As to quaternary structure, homodimer.

Its subcellular location is the cytoplasm. It is found in the nucleoid. Binds to DNA and alters its conformation. May be involved in regulation of gene expression, nucleoid organization and DNA protection. In Psychrobacter arcticus (strain DSM 17307 / VKM B-2377 / 273-4), this protein is Nucleoid-associated protein Psyc_0793.